Here is a 216-residue protein sequence, read N- to C-terminus: Octanoyltransferase (216 aa).

A BPL/LPL catalytic domain is found at 34-209 (ENTIDEIWLV…KMNQQLDYSH (176 aa)). Residues 73–80 (RGGQITFH), 140–142 (SLG), and 153–155 (GLA) each bind substrate. C171 serves as the catalytic Acyl-thioester intermediate.

It belongs to the LipB family.

The protein localises to the cytoplasm. The enzyme catalyses octanoyl-[ACP] + L-lysyl-[protein] = N(6)-octanoyl-L-lysyl-[protein] + holo-[ACP] + H(+). The protein operates within protein modification; protein lipoylation via endogenous pathway; protein N(6)-(lipoyl)lysine from octanoyl-[acyl-carrier-protein]: step 1/2. Catalyzes the transfer of endogenously produced octanoic acid from octanoyl-acyl-carrier-protein onto the lipoyl domains of lipoate-dependent enzymes. Lipoyl-ACP can also act as a substrate although octanoyl-ACP is likely to be the physiological substrate. The sequence is that of Octanoyltransferase from Psychromonas ingrahamii (strain DSM 17664 / CCUG 51855 / 37).